Consider the following 155-residue polypeptide: DNA gyrase inhibitor (155 aa).

It belongs to the DNA gyrase inhibitor family. As to quaternary structure, interacts with DNA gyrase.

It is found in the cytoplasm. In terms of biological role, inhibits the supercoiling activity of DNA gyrase. Acts by inhibiting DNA gyrase at an early step, prior to (or at the step of) binding of DNA by the gyrase. It protects cells against toxins that target DNA gyrase, by inhibiting activity of these toxins and reducing the formation of lethal double-strand breaks in the cell. The sequence is that of DNA gyrase inhibitor from Citrobacter koseri (strain ATCC BAA-895 / CDC 4225-83 / SGSC4696).